A 130-amino-acid chain; its full sequence is Small ribosomal subunit protein uS11 (130 aa).

This sequence belongs to the universal ribosomal protein uS11 family. In terms of assembly, part of the 30S ribosomal subunit. Interacts with proteins S7 and S18. Binds to IF-3.

Its function is as follows. Located on the platform of the 30S subunit, it bridges several disparate RNA helices of the 16S rRNA. Forms part of the Shine-Dalgarno cleft in the 70S ribosome. The protein is Small ribosomal subunit protein uS11 of Gluconacetobacter diazotrophicus (strain ATCC 49037 / DSM 5601 / CCUG 37298 / CIP 103539 / LMG 7603 / PAl5).